The chain runs to 261 residues: uncharacterized protein (261 aa).

The next 6 membrane-spanning stretches (helical) occupy residues 31 to 51 (TFLSFIPLFLVTSAFVLTGIV), 71 to 91 (TNVMLLIYAVIYTFNPKSWLL), 101 to 121 (LAYILFTFIGYNLILSIAGIA), 130 to 150 (LTSSIFLHVIAPIAFFIASFI), 167 to 187 (LLLFMIYPLIYGLYLVTIPYV), and 213 to 233 (FAWLVVFAVLFIYFPLSYLAI).

The protein localises to the cell membrane. This is an uncharacterized protein from Mycoplasma genitalium (strain ATCC 33530 / DSM 19775 / NCTC 10195 / G37) (Mycoplasmoides genitalium).